We begin with the raw amino-acid sequence, 468 residues long: Glutamine synthetase (468 aa).

Residues 13-97 form the GS beta-grasp domain; it reads NEVKFVDLRF…IRCDILEPAT (85 aa). Positions 105-468 constitute a GS catalytic domain; sequence PRSIAKRAED…PVEFELYYSV (364 aa). Residues Glu-130 and Glu-132 each coordinate Mg(2+). Glu-208 is an ATP binding site. The Mg(2+) site is built by Glu-213 and Glu-220. L-glutamate-binding positions include 264–265 and Gly-265; that span reads NG. Residue His-269 coordinates Mg(2+). ATP contacts are provided by residues 271–273 and Ser-273; that span reads HQS. L-glutamate contacts are provided by Arg-321, Glu-327, and Arg-339. ATP is bound by residues Arg-339, Arg-344, and Lys-352. Glu-357 lines the Mg(2+) pocket. Residue Arg-359 coordinates L-glutamate. The residue at position 397 (Tyr-397) is an O-AMP-tyrosine.

Belongs to the glutamine synthetase family. As to quaternary structure, oligomer of 12 subunits arranged in the form of two hexameric ring. Mg(2+) serves as cofactor.

The protein resides in the cytoplasm. The enzyme catalyses L-glutamate + NH4(+) + ATP = L-glutamine + ADP + phosphate + H(+). With respect to regulation, the activity of this enzyme could be controlled by adenylation under conditions of abundant glutamine. Catalyzes the ATP-dependent biosynthesis of glutamine from glutamate and ammonia. This chain is Glutamine synthetase, found in Vibrio alginolyticus.